Reading from the N-terminus, the 142-residue chain is Large ribosomal subunit protein uL11 (142 aa).

It belongs to the universal ribosomal protein uL11 family. Part of the ribosomal stalk of the 50S ribosomal subunit. Interacts with L10 and the large rRNA to form the base of the stalk. L10 forms an elongated spine to which L12 dimers bind in a sequential fashion forming a multimeric L10(L12)X complex. One or more lysine residues are methylated.

Forms part of the ribosomal stalk which helps the ribosome interact with GTP-bound translation factors. The chain is Large ribosomal subunit protein uL11 from Alcanivorax borkumensis (strain ATCC 700651 / DSM 11573 / NCIMB 13689 / SK2).